The primary structure comprises 710 residues: Interleukin-1 receptor-associated kinase 1 (710 aa).

In terms of domain architecture, Death spans Met27–Ala106. Phosphothreonine; by PKC/PRKCI is present on Thr66. The tract at residues Pro107–Arg133 is disordered. The proST region stretch occupies residues Pro110–Asn211. A compositionally biased stretch (low complexity) spans Pro111–Ala123. Residue Ser131 is modified to Phosphoserine. Glycyl lysine isopeptide (Lys-Gly) (interchain with G-Cter in ubiquitin) cross-links involve residues Lys134 and Lys180. The segment at Pro169–Leu190 is disordered. Low complexity predominate over residues Ser174 to Ser188. Thr209 bears the Phosphothreonine; by IRAK4 mark. Residues Phe212–Leu521 enclose the Protein kinase domain. ATP-binding positions include Ile218 to Val226 and Lys239. The Proton acceptor role is filled by Asp340. ATP contacts are provided by residues Lys342 to Asn345 and Asp358. The residue at position 375 (Ser375) is a Phosphoserine. Thr387 carries the phosphothreonine modification. 2 disordered regions span residues Trp527–Pro655 and Phe689–Ser710. Over residues Pro537 to Ser553 the composition is skewed to polar residues. Ser553 bears the Phosphoserine mark. Positions Ala567 to Gln576 are enriched in low complexity. The span at Ser616–Met639 shows a compositional bias: polar residues. Residues Glu640 to Pro654 show a composition bias toward low complexity.

The protein belongs to the protein kinase superfamily. TKL Ser/Thr protein kinase family. Pelle subfamily. Homodimer. Forms a complex with TRAF6, PELI1, IRAK4 and MYD88. Direct binding of SMAD6 to PELI1 prevents complex formation and hence negatively regulates IL1R-TLR signaling and eventually NF-kappa-B-mediated gene expression. The TRAF6-PELI1-IRAK4-MYD88 complex recruits MAP3K7/TAK1, TAB1 and TAB2 to mediate NF-kappa-B activation. Interaction with MYD88 recruits IRAK1 to the stimulated receptor complex. Interacts with TOLLIP; this interaction occurs in the cytosol prior to receptor activation. Interacts with IL1RL1. Interacts (when polyubiquitinated) with IKBKG/NEMO. Interacts with RSAD2/viperin. Interacts with IRAK1BP1. Interacts with PELI2. Interacts with ZC3H12A; this interaction increases the interaction between ZC3H12A and IKBKB/IKKB. Interacts with IRAK4. Interacts with PELI3. Interacts with PELI1 and TRAF6. Interacts with INAVA; the interaction takes place upon PRR stimulation. Interacts (via C-terminus) with NFATC4 (via N-terminus). Requires Mg(2+) as cofactor. Post-translationally, following recruitment on the activated receptor complex, phosphorylated on Thr-209, probably by IRAK4, resulting in a conformational change of the kinase domain, allowing further phosphorylations to take place. Thr-387 phosphorylation in the activation loop is required to achieve full enzymatic activity. In terms of processing, polyubiquitinated by TRAF6 after cell stimulation with IL-1-beta by PELI1, PELI2 and PELI3. Polyubiquitination occurs with polyubiquitin chains linked through 'Lys-63'. Ubiquitination promotes interaction with NEMO/IKBKG. Also sumoylated; leading to nuclear translocation. As to expression, highly expressed in liver, followed by kidney and skeletal muscle.

Its subcellular location is the cytoplasm. It localises to the nucleus. The protein localises to the lipid droplet. The catalysed reaction is L-seryl-[protein] + ATP = O-phospho-L-seryl-[protein] + ADP + H(+). It catalyses the reaction L-threonyl-[protein] + ATP = O-phospho-L-threonyl-[protein] + ADP + H(+). Functionally, serine/threonine-protein kinase that plays a critical role in initiating innate immune response against foreign pathogens. Involved in Toll-like receptor (TLR) and IL-1R signaling pathways. Is rapidly recruited by MYD88 to the receptor-signaling complex upon TLR activation. Association with MYD88 leads to IRAK1 phosphorylation by IRAK4 and subsequent autophosphorylation and kinase activation. Phosphorylates E3 ubiquitin ligases Pellino proteins (PELI1, PELI2 and PELI3) to promote pellino-mediated polyubiquitination of IRAK1. Then, the ubiquitin-binding domain of IKBKG/NEMO binds to polyubiquitinated IRAK1 bringing together the IRAK1-MAP3K7/TAK1-TRAF6 complex and the NEMO-IKKA-IKKB complex. In turn, MAP3K7/TAK1 activates IKKs (CHUK/IKKA and IKBKB/IKKB) leading to NF-kappa-B nuclear translocation and activation. Alternatively, phosphorylates TIRAP to promote its ubiquitination and subsequent degradation. Phosphorylates the interferon regulatory factor 7 (IRF7) to induce its activation and translocation to the nucleus, resulting in transcriptional activation of type I IFN genes, which drive the cell in an antiviral state. When sumoylated, translocates to the nucleus and phosphorylates STAT3. The chain is Interleukin-1 receptor-associated kinase 1 (Irak1) from Mus musculus (Mouse).